An 87-amino-acid chain; its full sequence is Small ribosomal subunit protein uS17 (87 aa).

This sequence belongs to the universal ribosomal protein uS17 family. Part of the 30S ribosomal subunit.

Functionally, one of the primary rRNA binding proteins, it binds specifically to the 5'-end of 16S ribosomal RNA. The polypeptide is Small ribosomal subunit protein uS17 (Macrococcus caseolyticus (strain JCSC5402) (Macrococcoides caseolyticum)).